The chain runs to 398 residues: Phytoene synthase 2, chloroplastic (398 aa).

Residues 1–80 (MASSSSAAAL…EEAVYEVVLR (80 aa)) constitute a chloroplast transit peptide.

This sequence belongs to the phytoene/squalene synthase family. As to expression, expressed in leaves and endosperm. Expressed in developing leaves.

It is found in the plastid. It localises to the chloroplast membrane. Its subcellular location is the chloroplast. The protein localises to the plastoglobule. It carries out the reaction 2 (2E,6E,10E)-geranylgeranyl diphosphate = 15-cis-phytoene + 2 diphosphate. In terms of biological role, catalyzes the conversion of geranylgeranyl diphosphate to phytoene. Mediates the first committed step in carotenoid biosynthesis. This Oryza sativa subsp. japonica (Rice) protein is Phytoene synthase 2, chloroplastic.